Here is a 436-residue protein sequence, read N- to C-terminus: Methyl-accepting chemotaxis protein Amb0994 (436 aa).

The Cytoplasmic portion of the chain corresponds to 1–8; it reads METTLGSY. A helical membrane pass occupies residues 9–29; it reads ARTLSLGMLVPSAICLLAGTF. A topological domain (periplasmic) is located at residue glycine 30. The helical transmembrane segment at 31–51 threads the bilayer; that stretch reads LLGGSSIALWVVIAVSLLGVV. Topologically, residues 52 to 436 are cytoplasmic; the sequence is GGVKIGGSAR…DGFIARIGGR (385 aa). Residues 180 to 416 enclose the Methyl-accepting transducer domain; that stretch reads AATELEASSG…QVADAASELS (237 aa). Glutamine 211 is subject to Glutamate methyl ester (Gln). Residue glutamate 225 is modified to Glutamate methyl ester (Glu). Residues 321 to 436 form a required for interaction with MamK and to respond to the magnetic field region; it reads TEDITSQVAH…DGFIARIGGR (116 aa).

It belongs to the methyl-accepting chemotaxis (MCP) protein family. As to quaternary structure, interacts with MamK at cell poles and septa.

Its subcellular location is the cell inner membrane. Its function is as follows. Probable methyl-accepting taxis protein. May be the receptor that senses the torque generated from the interaction between the magnetosome dipole moment and the external magnetic field. Overproduction interferes with magnetotaxis, cells respond more slowly to changes in the magnetic field; requires the MamK-interacting C-terminus of the protein. The effect of magnetic sensing is to control flagellar rotation. Chemotactic-signal transducers respond to changes in the concentration of attractants and repellents in the environment, transduce a signal from the outside to the inside of the cell, and facilitate sensory adaptation through variation of methylation levels. Attractants increase the level of methylation while repellents decrease the level of methylation. The sequence is that of Methyl-accepting chemotaxis protein Amb0994 from Paramagnetospirillum magneticum (strain ATCC 700264 / AMB-1) (Magnetospirillum magneticum).